A 1348-amino-acid chain; its full sequence is Putative late blight resistance protein homolog R1B-12 (1348 aa).

Coiled coils occupy residues 446–469 and 561–583; these read RYSDSLAFLKNQLQVIQTEFESLQ and PRMNEEIVGFEDVIENLRKKLLN. The NB-ARC domain occupies 552-848; it reads RTSSQLTRTP…ISESFIKSCE (297 aa). 595–602 contributes to the ATP binding site; sequence GMPGLGKT. LRR repeat units follow at residues 977–1001, 1051–1074, 1123–1147, 1151–1170, 1171–1194, 1197–1219, 1220–1244, and 1309–1332; these read FKFLKVLDLEHQFFIDFIPTELLYL, LRHLHIPYFSTEKEEALLENSAKL, PITLEILKLYRSSDFKVIPFCISAQ, YLKLSGFYLNSQYLSETADH, LKHLEVLKLHNIEFGGHSEWEVSN, FPQLKILKLEYVSLMKLIVADDA, FPNLEQLVLHDCEDLMEIPSCFMDI, and LPGIQSIAVDSNEKKFIVIGDMDA. One can recognise an HMA domain in the interval 1284 to 1348; the sequence is VKKMVLKFDT…VGKLINRGML (65 aa).

The protein belongs to the disease resistance NB-LRR family.

The protein resides in the cytoplasm. The protein localises to the membrane. In terms of biological role, confers resistance to late blight (Phytophthora infestans) races carrying the avirulence gene Avr1. Resistance proteins guard the plant against pathogens that contain an appropriate avirulence protein via an indirect interaction with this avirulence protein. That triggers a defense system including the hypersensitive response, which restricts the pathogen growth. The sequence is that of Putative late blight resistance protein homolog R1B-12 (R1B-12) from Solanum demissum (Wild potato).